A 160-amino-acid polypeptide reads, in one-letter code: Nucleotide-binding protein VS_1405 (160 aa).

Belongs to the YajQ family.

Functionally, nucleotide-binding protein. This is Nucleotide-binding protein VS_1405 from Vibrio atlanticus (strain LGP32) (Vibrio splendidus (strain Mel32)).